The primary structure comprises 163 residues: Endoribonuclease YbeY (163 aa).

Positions 123, 127, and 133 each coordinate Zn(2+).

It belongs to the endoribonuclease YbeY family. Zn(2+) is required as a cofactor.

Its subcellular location is the cytoplasm. Functionally, single strand-specific metallo-endoribonuclease involved in late-stage 70S ribosome quality control and in maturation of the 3' terminus of the 16S rRNA. The sequence is that of Endoribonuclease YbeY from Helicobacter hepaticus (strain ATCC 51449 / 3B1).